Here is a 206-residue protein sequence, read N- to C-terminus: Peptidyl-tRNA hydrolase (206 aa).

Y14 contributes to the tRNA binding site. H19 functions as the Proton acceptor in the catalytic mechanism. TRNA contacts are provided by Y64 and N66. The segment at 182-206 (FNQKNKKKKEKEQPEAATDQLLENK) is disordered.

Belongs to the PTH family. In terms of assembly, monomer.

It localises to the cytoplasm. It catalyses the reaction an N-acyl-L-alpha-aminoacyl-tRNA + H2O = an N-acyl-L-amino acid + a tRNA + H(+). Functionally, hydrolyzes ribosome-free peptidyl-tRNAs (with 1 or more amino acids incorporated), which drop off the ribosome during protein synthesis, or as a result of ribosome stalling. Its function is as follows. Catalyzes the release of premature peptidyl moieties from peptidyl-tRNA molecules trapped in stalled 50S ribosomal subunits, and thus maintains levels of free tRNAs and 50S ribosomes. The polypeptide is Peptidyl-tRNA hydrolase (Desulforamulus reducens (strain ATCC BAA-1160 / DSM 100696 / MI-1) (Desulfotomaculum reducens)).